Here is a 115-residue protein sequence, read N- to C-terminus: Peptidyl-tRNA hydrolase (115 aa).

This sequence belongs to the PTH2 family.

The protein localises to the cytoplasm. The catalysed reaction is an N-acyl-L-alpha-aminoacyl-tRNA + H2O = an N-acyl-L-amino acid + a tRNA + H(+). In terms of biological role, the natural substrate for this enzyme may be peptidyl-tRNAs which drop off the ribosome during protein synthesis. The sequence is that of Peptidyl-tRNA hydrolase (pth) from Nanoarchaeum equitans (strain Kin4-M).